The sequence spans 195 residues: Glycerol-3-phosphate acyltransferase (195 aa).

The next 5 membrane-spanning stretches (helical) occupy residues 3 to 23 (EAALLVLCYLLGSIPFSYFFT), 51 to 71 (GVALLAFLGDLLKGLLAAWIG), 79 to 99 (LLVICVILAVIGHIYPVFLGF), 111 to 131 (IILFLMPDVTGILLLIFLAIV), and 153 to 173 (LAMGKPWSYVVIGILMAALVV).

Belongs to the PlsY family. As to quaternary structure, probably interacts with PlsX.

Its subcellular location is the cell membrane. The enzyme catalyses an acyl phosphate + sn-glycerol 3-phosphate = a 1-acyl-sn-glycero-3-phosphate + phosphate. The protein operates within lipid metabolism; phospholipid metabolism. Its function is as follows. Catalyzes the transfer of an acyl group from acyl-phosphate (acyl-PO(4)) to glycerol-3-phosphate (G3P) to form lysophosphatidic acid (LPA). This enzyme utilizes acyl-phosphate as fatty acyl donor, but not acyl-CoA or acyl-ACP. The sequence is that of Glycerol-3-phosphate acyltransferase from Syntrophomonas wolfei subsp. wolfei (strain DSM 2245B / Goettingen).